The chain runs to 233 residues: 2-C-methyl-D-erythritol 4-phosphate cytidylyltransferase (233 aa).

The protein belongs to the IspD/TarI cytidylyltransferase family. IspD subfamily.

The catalysed reaction is 2-C-methyl-D-erythritol 4-phosphate + CTP + H(+) = 4-CDP-2-C-methyl-D-erythritol + diphosphate. It functions in the pathway isoprenoid biosynthesis; isopentenyl diphosphate biosynthesis via DXP pathway; isopentenyl diphosphate from 1-deoxy-D-xylulose 5-phosphate: step 2/6. Its function is as follows. Catalyzes the formation of 4-diphosphocytidyl-2-C-methyl-D-erythritol from CTP and 2-C-methyl-D-erythritol 4-phosphate (MEP). This is 2-C-methyl-D-erythritol 4-phosphate cytidylyltransferase from Aromatoleum aromaticum (strain DSM 19018 / LMG 30748 / EbN1) (Azoarcus sp. (strain EbN1)).